A 392-amino-acid chain; its full sequence is Probable protein phosphatase 2C 22 (392 aa).

Residues 1–26 are disordered; the sequence is MEETRGISDPENGSSSYGGKPPNPLS. Residues 89-356 enclose the PPM-type phosphatase domain; the sequence is RSGAWSDIGS…DNVTAVVVCL (268 aa). 4 residues coordinate Mn(2+): aspartate 133, glycine 134, aspartate 304, and aspartate 347.

The protein belongs to the PP2C family. Requires Mg(2+) as cofactor. It depends on Mn(2+) as a cofactor.

It catalyses the reaction O-phospho-L-seryl-[protein] + H2O = L-seryl-[protein] + phosphate. It carries out the reaction O-phospho-L-threonyl-[protein] + H2O = L-threonyl-[protein] + phosphate. The protein is Probable protein phosphatase 2C 22 of Arabidopsis thaliana (Mouse-ear cress).